The primary structure comprises 402 residues: Putative polyketide beta-ketoacyl synthase 2 (402 aa).

Disordered stretches follow at residues 1 to 30 (MTPV…WAPR) and 188 to 222 (VEPR…FDRD). One can recognise a Ketosynthase family 3 (KS3) domain in the interval 1-400 (MTPVAVTGMG…GFNSALVVRA (400 aa)). Over residues 192 to 205 (SAPGAGSPSSPAGG) the composition is skewed to low complexity.

Belongs to the thiolase-like superfamily. Beta-ketoacyl-ACP synthases family.

It functions in the pathway antifungal biosynthesis; monensin biosynthesis. The chain is Putative polyketide beta-ketoacyl synthase 2 from Streptomyces virginiae (Streptomyces cinnamonensis).